The chain runs to 945 residues: Kinesin-like protein KIN-7F (945 aa).

The 323-residue stretch at 34 to 356 (RILVSVRLRP…LLFASCAKEV (323 aa)) folds into the Kinesin motor domain. Position 120-127 (120-127 (GQTSSGKT)) interacts with ATP. The stretch at 365–437 (VMSDKALVKQ…QDLLQVVGDN (73 aa)) forms a coiled coil. 2 disordered regions span residues 484 to 512 (RRVAQREHKPQQAENNVQFTTPSRYSVSS) and 553 to 588 (NECLESSAVGSNSLQDPNAGSSMHINNDSNSSMNSR). 2 stretches are compositionally biased toward polar residues: residues 495–512 (QAENNVQFTTPSRYSVSS) and 560–587 (AVGSNSLQDPNAGSSMHINNDSNSSMNS).

The protein belongs to the TRAFAC class myosin-kinesin ATPase superfamily. Kinesin family. KIN-7 subfamily. As to quaternary structure, binds microtubules.

In terms of biological role, binds ATP/ADP in vitro. Possesses low ATPase activity but high affinity for microtubules. The sequence is that of Kinesin-like protein KIN-7F from Oryza sativa subsp. japonica (Rice).